The chain runs to 333 residues: Ornithine carbamoyltransferase (333 aa).

Carbamoyl phosphate-binding positions include 56–59 (STRT), Q83, R107, and 134–137 (HPTQ). L-ornithine contacts are provided by residues N167, D231, and 235–236 (SM). Residues 273-274 (CL) and R318 contribute to the carbamoyl phosphate site.

This sequence belongs to the aspartate/ornithine carbamoyltransferase superfamily. OTCase family.

The protein resides in the cytoplasm. It carries out the reaction carbamoyl phosphate + L-ornithine = L-citrulline + phosphate + H(+). The protein operates within amino-acid biosynthesis; L-arginine biosynthesis; L-arginine from L-ornithine and carbamoyl phosphate: step 1/3. Its function is as follows. Reversibly catalyzes the transfer of the carbamoyl group from carbamoyl phosphate (CP) to the N(epsilon) atom of ornithine (ORN) to produce L-citrulline. This chain is Ornithine carbamoyltransferase, found in Staphylococcus aureus (strain MSSA476).